The sequence spans 146 residues: MAGPLRAPLLLLAILAVALALSPAAGASPGRTPRLLGGPMDASVEEEGVRRALDFAVSEYNKASNDMYHSRALQVVRARKQIVAGVNYFLDVEMGRTTCTKNQPNLDNCPFHEQPHLKRKAFCSFQIYSVPWQGIMTLSKSTCQDA.

A signal peptide spans 1–26 (MAGPLRAPLLLLAILAVALALSPAAG). A Phosphoserine modification is found at serine 43. The Secondary area of contact motif lies at 81–85 (QIVAG). Disulfide bonds link cysteine 99–cysteine 109 and cysteine 123–cysteine 143.

This sequence belongs to the cystatin family.

It is found in the secreted. In terms of biological role, as an inhibitor of cysteine proteinases, this protein is thought to serve an important physiological role as a local regulator of this enzyme activity. The protein is Cystatin-C (CST3) of Saimiri sciureus (Common squirrel monkey).